The chain runs to 99 residues: NADH-quinone oxidoreductase subunit K (99 aa).

3 helical membrane passes run 3–23 (PANY…GVLV), 28–48 (IVVF…LVTF), and 62–82 (FFVM…ILAI).

The protein belongs to the complex I subunit 4L family. NDH-1 is composed of 14 different subunits. Subunits NuoA, H, J, K, L, M, N constitute the membrane sector of the complex.

The protein localises to the cell membrane. It catalyses the reaction a quinone + NADH + 5 H(+)(in) = a quinol + NAD(+) + 4 H(+)(out). Its function is as follows. NDH-1 shuttles electrons from NADH, via FMN and iron-sulfur (Fe-S) centers, to quinones in the respiratory chain. The immediate electron acceptor for the enzyme in this species is believed to be a menaquinone. Couples the redox reaction to proton translocation (for every two electrons transferred, four hydrogen ions are translocated across the cytoplasmic membrane), and thus conserves the redox energy in a proton gradient. The sequence is that of NADH-quinone oxidoreductase subunit K from Parafrankia sp. (strain EAN1pec).